We begin with the raw amino-acid sequence, 214 residues long: Large ribosomal subunit protein uL4 (214 aa).

The disordered stretch occupies residues 56–86; the sequence is THKVKNRAEVSGTGKKPWKQKSTGKARAGSK. Positions 71–85 are enriched in basic residues; the sequence is KPWKQKSTGKARAGS.

It belongs to the universal ribosomal protein uL4 family. Part of the 50S ribosomal subunit.

In terms of biological role, one of the primary rRNA binding proteins, this protein initially binds near the 5'-end of the 23S rRNA. It is important during the early stages of 50S assembly. It makes multiple contacts with different domains of the 23S rRNA in the assembled 50S subunit and ribosome. Forms part of the polypeptide exit tunnel. The sequence is that of Large ribosomal subunit protein uL4 from Mesomycoplasma hyopneumoniae (strain 232) (Mycoplasma hyopneumoniae).